Consider the following 88-residue polypeptide: Large ribosomal subunit protein eL15 (88 aa).

This sequence belongs to the eukaryotic ribosomal protein eL15 family.

The polypeptide is Large ribosomal subunit protein eL15 (RPL15) (Brassica napus (Rape)).